The sequence spans 150 residues: 3-hydroxyacyl-[acyl-carrier-protein] dehydratase FabZ (150 aa).

Residue His-54 is part of the active site.

The protein belongs to the thioester dehydratase family. FabZ subfamily.

Its subcellular location is the cytoplasm. It carries out the reaction a (3R)-hydroxyacyl-[ACP] = a (2E)-enoyl-[ACP] + H2O. In terms of biological role, involved in unsaturated fatty acids biosynthesis. Catalyzes the dehydration of short chain beta-hydroxyacyl-ACPs and long chain saturated and unsaturated beta-hydroxyacyl-ACPs. This Vibrio vulnificus (strain CMCP6) protein is 3-hydroxyacyl-[acyl-carrier-protein] dehydratase FabZ.